Consider the following 216-residue polypeptide: GTP-binding nuclear protein Ran, testis-specific isoform (216 aa).

Ala2 carries the post-translational modification N-acetylalanine. The Small GTPase Ran-type domain maps to 7–171; that stretch reads PQIQFKLVLV…FWLARKLIGD (165 aa). 17–24 serves as a coordination point for GTP; the sequence is GDGGTGKT. Phosphothreonine is present on Thr24. Residues 37 to 45 are switch-I; sequence KEYVATLGV. Lys60 bears the N6-acetyllysine mark. A GTP-binding site is contributed by 65-69; that stretch reads DTAGQ. Positions 68 to 84 are switch-II; it reads GQEKFGGLRDGYYIQAQ. Position 71 is an N6-acetyllysine; alternate (Lys71). Lys71 participates in a covalent cross-link: Glycyl lysine isopeptide (Lys-Gly) (interchain with G-Cter in SUMO2); alternate. Lys71 participates in a covalent cross-link: Glycyl lysine isopeptide (Lys-Gly) (interchain with G-Cter in ubiquitin); alternate. Lys99 carries the N6-acetyllysine modification. 122-125 contributes to the GTP binding site; that stretch reads NKVD. Lys134 is modified (N6-acetyllysine). Residue Lys152 forms a Glycyl lysine isopeptide (Lys-Gly) (interchain with G-Cter in SUMO2) linkage. Lys159 carries the N6-acetyllysine; alternate modification. N6-succinyllysine; alternate is present on Lys159.

It belongs to the small GTPase superfamily. Ran family. Testis specific.

It is found in the nucleus. It catalyses the reaction GTP + H2O = GDP + phosphate + H(+). In terms of biological role, GTP-binding protein involved in nucleocytoplasmic transport. Required for the import of protein into the nucleus and also for RNA export. Involved in chromatin condensation and control of cell cycle. This is GTP-binding nuclear protein Ran, testis-specific isoform (Rasl2-9) from Rattus norvegicus (Rat).